The following is a 529-amino-acid chain: Auxin response factor 13 (529 aa).

The interval M1–P22 is disordered. The span at A7 to P22 shows a compositional bias: pro residues. The TF-B3 DNA-binding region spans Y128–A234. Disordered stretches follow at residues I443–A462 and P497–L529. The segment covering V444 to S461 has biased composition (polar residues). A compositionally biased stretch (acidic residues) spans G499–S510. Residues D511–N523 are compositionally biased toward polar residues.

This sequence belongs to the ARF family. As to quaternary structure, homo and heterodimers. Expressed in roots, culms, leaves and young panicles.

It localises to the nucleus. Functionally, auxin response factors (ARFs) are transcriptional factors that bind specifically to the DNA sequence 5'-TGTCTC-3' found in the auxin-responsive promoter elements (AuxREs). In Oryza sativa subsp. japonica (Rice), this protein is Auxin response factor 13 (ARF13).